A 167-amino-acid polypeptide reads, in one-letter code: SsrA-binding protein (167 aa).

Basic and acidic residues predominate over residues 139–158 (QNHDKRDAAKDRDWQRDKQR). The interval 139–167 (QNHDKRDAAKDRDWQRDKQRVMRRHNRDA) is disordered.

The protein belongs to the SmpB family.

It is found in the cytoplasm. Its function is as follows. Required for rescue of stalled ribosomes mediated by trans-translation. Binds to transfer-messenger RNA (tmRNA), required for stable association of tmRNA with ribosomes. tmRNA and SmpB together mimic tRNA shape, replacing the anticodon stem-loop with SmpB. tmRNA is encoded by the ssrA gene; the 2 termini fold to resemble tRNA(Ala) and it encodes a 'tag peptide', a short internal open reading frame. During trans-translation Ala-aminoacylated tmRNA acts like a tRNA, entering the A-site of stalled ribosomes, displacing the stalled mRNA. The ribosome then switches to translate the ORF on the tmRNA; the nascent peptide is terminated with the 'tag peptide' encoded by the tmRNA and targeted for degradation. The ribosome is freed to recommence translation, which seems to be the essential function of trans-translation. This Xanthomonas axonopodis pv. citri (strain 306) protein is SsrA-binding protein.